Consider the following 200-residue polypeptide: dTTP/UTP pyrophosphatase (200 aa).

The active-site Proton acceptor is Asp-76.

It belongs to the Maf family. YhdE subfamily. A divalent metal cation is required as a cofactor.

Its subcellular location is the cytoplasm. The catalysed reaction is dTTP + H2O = dTMP + diphosphate + H(+). It carries out the reaction UTP + H2O = UMP + diphosphate + H(+). In terms of biological role, nucleoside triphosphate pyrophosphatase that hydrolyzes dTTP and UTP. May have a dual role in cell division arrest and in preventing the incorporation of modified nucleotides into cellular nucleic acids. The polypeptide is dTTP/UTP pyrophosphatase (Acetivibrio thermocellus (strain ATCC 27405 / DSM 1237 / JCM 9322 / NBRC 103400 / NCIMB 10682 / NRRL B-4536 / VPI 7372) (Clostridium thermocellum)).